A 265-amino-acid polypeptide reads, in one-letter code: Small ribosomal subunit protein uS2 (265 aa).

The segment at 231-265 (VEEEYEDYEGAEDDYEYDETEYTDSVIPDDEEEAE) is disordered.

This sequence belongs to the universal ribosomal protein uS2 family.

In Trichormus variabilis (strain ATCC 29413 / PCC 7937) (Anabaena variabilis), this protein is Small ribosomal subunit protein uS2.